The primary structure comprises 173 residues: Large ribosomal subunit protein uL16 (173 aa).

It belongs to the universal ribosomal protein uL16 family.

This Methanosarcina mazei (strain ATCC BAA-159 / DSM 3647 / Goe1 / Go1 / JCM 11833 / OCM 88) (Methanosarcina frisia) protein is Large ribosomal subunit protein uL16.